Consider the following 109-residue polypeptide: Mitochondrial pyruvate carrier 1 (109 aa).

The residue at position 2 (A2) is an N-acetylalanine. The Mitochondrial matrix segment spans residues 2 to 20 (AGALVRKAADYVRSKDFRD). The chain crosses the membrane as a helical span at residues 21-41 (YLMSTHFWGPVANWGLPIAAI). Residues 42-52 (NDMKKSPEIIS) are Mitochondrial intermembrane-facing. Residues 53–71 (GRMTFALCCYSLTFMRFAY) traverse the membrane as a helical segment. K72 carries the post-translational modification N6-acetyllysine. Over 72–109 (KVQPRNWLLFACHVTNEVAQLIQGGRLINYEMSKRPSA) the chain is Mitochondrial matrix.

It belongs to the mitochondrial pyruvate carrier (MPC) (TC 2.A.105) family. In terms of assembly, homodimer. Forms heterodimer with MPC2. The heterodimer is the more stable and dominant form.

It localises to the mitochondrion inner membrane. It catalyses the reaction pyruvate(out) + H(+)(out) = pyruvate(in) + H(+)(in). Mediates the uptake of pyruvate into mitochondria. The chain is Mitochondrial pyruvate carrier 1 (Mpc1) from Mus musculus (Mouse).